The sequence spans 1011 residues: Ankyrin repeat domain-containing protein 18B (1011 aa).

ANK repeat units follow at residues 67–96 (KDRTVLHLACAHGRVQVVTLLLDRKCQINI), 100–129 (LNRTPLMKAVHCQEEACAIILLKRGANPNI), 133–162 (YGNTALHYAVYNEGTSLAERLLSHHANIEA), 166–195 (EGNTPLLFAINSRRQHMVEFLLKNQANIHA), and 199–228 (FKRTALILAVQHNLSSIVTLLLQQNIHISS). Disordered regions lie at residues 264–330 (LRND…GKKK) and 533–554 (MHPNGEAKESQSIGKQNSSEER). Coiled coils occupy residues 277-319 (ENLK…ENKQ), 385-639 (NEEM…ELVD), 692-722 (ISLLNYTADQIRKKNRELEEEATGYKKCLEM), and 752-908 (FKKL…EAFA). Residues 280 to 293 (KKRKKRKKLKKRKE) are compositionally biased toward basic residues. The segment covering 294-319 (GAKAEHNLKVASEEKQERLERSENKQ) has biased composition (basic and acidic residues).

The polypeptide is Ankyrin repeat domain-containing protein 18B (ANKRD18B) (Homo sapiens (Human)).